Here is a 132-residue protein sequence, read N- to C-terminus: Small ribosomal subunit protein uS8 (132 aa).

It belongs to the universal ribosomal protein uS8 family. As to quaternary structure, part of the 30S ribosomal subunit. Contacts proteins S5 and S12.

In terms of biological role, one of the primary rRNA binding proteins, it binds directly to 16S rRNA central domain where it helps coordinate assembly of the platform of the 30S subunit. The sequence is that of Small ribosomal subunit protein uS8 from Syntrophobacter fumaroxidans (strain DSM 10017 / MPOB).